The sequence spans 268 residues: Tryptophan synthase alpha chain (268 aa).

Catalysis depends on proton acceptor residues E49 and D60.

The protein belongs to the TrpA family. As to quaternary structure, tetramer of two alpha and two beta chains.

It carries out the reaction (1S,2R)-1-C-(indol-3-yl)glycerol 3-phosphate + L-serine = D-glyceraldehyde 3-phosphate + L-tryptophan + H2O. The protein operates within amino-acid biosynthesis; L-tryptophan biosynthesis; L-tryptophan from chorismate: step 5/5. In terms of biological role, the alpha subunit is responsible for the aldol cleavage of indoleglycerol phosphate to indole and glyceraldehyde 3-phosphate. This Pectobacterium atrosepticum (strain SCRI 1043 / ATCC BAA-672) (Erwinia carotovora subsp. atroseptica) protein is Tryptophan synthase alpha chain.